Reading from the N-terminus, the 90-residue chain is Probable Fe(2+)-trafficking protein (90 aa).

It belongs to the Fe(2+)-trafficking protein family.

Its function is as follows. Could be a mediator in iron transactions between iron acquisition and iron-requiring processes, such as synthesis and/or repair of Fe-S clusters in biosynthetic enzymes. In Actinobacillus succinogenes (strain ATCC 55618 / DSM 22257 / CCUG 43843 / 130Z), this protein is Probable Fe(2+)-trafficking protein.